A 373-amino-acid chain; its full sequence is Dual-specificity RNA methyltransferase RlmN (373 aa).

The Proton acceptor role is filled by Glu94. The 240-residue stretch at 100 to 339 (EDDRATLCVS…VIVRKTRGDD (240 aa)) folds into the Radical SAM core domain. Cys107 and Cys344 are oxidised to a cystine. Residues Cys114, Cys118, and Cys121 each contribute to the [4Fe-4S] cluster site. S-adenosyl-L-methionine contacts are provided by residues 168 to 169 (GE), Ser200, 222 to 224 (SIH), and Asn301. The S-methylcysteine intermediate role is filled by Cys344.

The protein belongs to the radical SAM superfamily. RlmN family. The cofactor is [4Fe-4S] cluster.

It is found in the cytoplasm. It carries out the reaction adenosine(2503) in 23S rRNA + 2 reduced [2Fe-2S]-[ferredoxin] + 2 S-adenosyl-L-methionine = 2-methyladenosine(2503) in 23S rRNA + 5'-deoxyadenosine + L-methionine + 2 oxidized [2Fe-2S]-[ferredoxin] + S-adenosyl-L-homocysteine. It catalyses the reaction adenosine(37) in tRNA + 2 reduced [2Fe-2S]-[ferredoxin] + 2 S-adenosyl-L-methionine = 2-methyladenosine(37) in tRNA + 5'-deoxyadenosine + L-methionine + 2 oxidized [2Fe-2S]-[ferredoxin] + S-adenosyl-L-homocysteine. Its function is as follows. Specifically methylates position 2 of adenine 2503 in 23S rRNA and position 2 of adenine 37 in tRNAs. m2A2503 modification seems to play a crucial role in the proofreading step occurring at the peptidyl transferase center and thus would serve to optimize ribosomal fidelity. The sequence is that of Dual-specificity RNA methyltransferase RlmN from Shewanella sp. (strain ANA-3).